A 216-amino-acid chain; its full sequence is Alanyl-tRNA editing protein AlaX-M (216 aa).

Residues His-99, His-103, and Cys-182 each contribute to the Zn(2+) site.

Belongs to the class-II aminoacyl-tRNA synthetase family. Editing domain AlaX-M subfamily. Monomer. Requires Zn(2+) as cofactor.

The protein resides in the cytoplasm. Functionally, functions in trans to edit the amino acid moiety from mischarged charged Gly-tRNA(Ala) and Ser-tRNA(Ala). The protein is Alanyl-tRNA editing protein AlaX-M (alaXM) of Pyrococcus horikoshii (strain ATCC 700860 / DSM 12428 / JCM 9974 / NBRC 100139 / OT-3).